A 250-amino-acid chain; its full sequence is Probable transcriptional regulatory protein Plut_1643 (250 aa).

This sequence belongs to the TACO1 family.

Its subcellular location is the cytoplasm. This is Probable transcriptional regulatory protein Plut_1643 from Chlorobium luteolum (strain DSM 273 / BCRC 81028 / 2530) (Pelodictyon luteolum).